We begin with the raw amino-acid sequence, 855 residues long: Oxysterol-binding protein-related protein 3 (855 aa).

A disordered region spans residues 1–32; sequence MSDEKNLGVSQKLVSPSRSTSSCSSKQGSRQD. Phosphoserine occurs at positions 15 and 33. The segment covering 15–31 has biased composition (low complexity); that stretch reads SPSRSTSSCSSKQGSRQ. One can recognise a PH domain in the interval 50 to 145; it reads PPVQKGFLLK…WVSKLRHHRM (96 aa). Residues 161 to 167 carry the FFAT 1 motif; sequence FFSGSSV. Phosphoserine is present on residues S199, S250, S272, S277, S288, S291, S340, S393, S405, and S408. The segment at 274–293 is disordered; that stretch reads PNLSTLDFGEEKSYSDGSEA. A disordered region spans residues 377 to 396; the sequence is DPPAVPKPGDNLAEENSRDE. Residues 450–454 carry the FFAT 2 motif; sequence LSLDN. The segment at 468–490 is disordered; it reads PVLESSGEARSKRRTSLPAPGPN.

This sequence belongs to the OSBP family. Homodimer. Interacts with RRAS. Interacts (phosphorylated form) with VAPA. Interacts with OSBPL6. Phosphorylation is enhanced in vitro by phorbol-12-myristate-13-acetate (PMA), forskolin and calcium ionophore A23187. Phosphorylation seems to be stimulated in conditions of low cell-cell (or cell-matrix) adhesion. Expressed in spinal ganglia. Expressed in a subset of small lymphocytes (at protein level).

It is found in the endoplasmic reticulum membrane. Its subcellular location is the cytoplasm. The protein localises to the cytosol. The protein resides in the cell membrane. It localises to the cell projection. It is found in the filopodium tip. Its subcellular location is the nucleus membrane. Functionally, phosphoinositide-binding protein which associates with both cell and endoplasmic reticulum (ER) membranes. Can bind to the ER membrane protein VAPA and recruit VAPA to plasma membrane sites, thus linking these intracellular compartments. The ORP3-VAPA complex stimulates RRAS signaling which in turn attenuates integrin beta-1 (ITGB1) activation at the cell surface. With VAPA, may regulate ER morphology. Has a role in regulation of the actin cytoskeleton, cell polarity and cell adhesion. Binds to phosphoinositides with preference for PI(3,4)P2 and PI(3,4,5)P3. Also binds 25-hydroxycholesterol and cholesterol. The chain is Oxysterol-binding protein-related protein 3 (Osbpl3) from Mus musculus (Mouse).